Consider the following 219-residue polypeptide: N-(5'-phosphoribosyl)anthranilate isomerase (219 aa).

It belongs to the TrpF family.

It catalyses the reaction N-(5-phospho-beta-D-ribosyl)anthranilate = 1-(2-carboxyphenylamino)-1-deoxy-D-ribulose 5-phosphate. Its pathway is amino-acid biosynthesis; L-tryptophan biosynthesis; L-tryptophan from chorismate: step 3/5. The polypeptide is N-(5'-phosphoribosyl)anthranilate isomerase (Bordetella avium (strain 197N)).